A 463-amino-acid chain; its full sequence is uncharacterized protein (463 aa).

12 helical membrane-spanning segments follow: residues D21–T40, A50–V72, P84–P104, L112–P132, L156–L176, G186–F206, L237–V257, L271–P291, I311–C331, I334–I354, G367–V387, and L408–I428.

It belongs to the sodium:galactoside symporter (TC 2.A.2) family.

The protein resides in the cell membrane. This is an uncharacterized protein from Bacillus subtilis (strain 168).